The primary structure comprises 455 residues: UDP-N-acetylmuramoylalanine--D-glutamate ligase (455 aa).

An ATP-binding site is contributed by 119–125 (GTNGKTT).

Belongs to the MurCDEF family.

It localises to the cytoplasm. It catalyses the reaction UDP-N-acetyl-alpha-D-muramoyl-L-alanine + D-glutamate + ATP = UDP-N-acetyl-alpha-D-muramoyl-L-alanyl-D-glutamate + ADP + phosphate + H(+). Its pathway is cell wall biogenesis; peptidoglycan biosynthesis. Functionally, cell wall formation. Catalyzes the addition of glutamate to the nucleotide precursor UDP-N-acetylmuramoyl-L-alanine (UMA). This is UDP-N-acetylmuramoylalanine--D-glutamate ligase from Listeria monocytogenes serotype 4b (strain F2365).